Reading from the N-terminus, the 522-residue chain is AAA ATPase forming ring-shaped complexes (522 aa).

Positions 1 to 26 (MGQEKHTDAASQSRDPEAVAAHENDQ) are disordered. The stretch at 20 to 57 (AAHENDQLRQRNHALAKALTRATEELRKAKAQLEQFMA) forms a coiled coil. 248–253 (GNGKTL) contacts ATP.

Belongs to the AAA ATPase family. Homohexamer. Assembles into a hexameric ring structure.

The protein is AAA ATPase forming ring-shaped complexes of Bifidobacterium animalis subsp. lactis (strain AD011).